A 445-amino-acid chain; its full sequence is tRNA modification GTPase MnmE (445 aa).

Residues Arg25, Glu83, and Lys121 each coordinate (6S)-5-formyl-5,6,7,8-tetrahydrofolate. The TrmE-type G domain maps to 217 to 371 (GVRVVILGPP…LLTLIQEKSR (155 aa)). GTP contacts are provided by residues 227–232 (NAGKST), 246–252 (SEHPGTT), and 271–274 (DTAG). Ser231 and Thr252 together coordinate Mg(2+). Lys445 serves as a coordination point for (6S)-5-formyl-5,6,7,8-tetrahydrofolate.

The protein belongs to the TRAFAC class TrmE-Era-EngA-EngB-Septin-like GTPase superfamily. TrmE GTPase family. In terms of assembly, homodimer. Heterotetramer of two MnmE and two MnmG subunits. K(+) is required as a cofactor.

The protein localises to the cytoplasm. In terms of biological role, exhibits a very high intrinsic GTPase hydrolysis rate. Involved in the addition of a carboxymethylaminomethyl (cmnm) group at the wobble position (U34) of certain tRNAs, forming tRNA-cmnm(5)s(2)U34. This is tRNA modification GTPase MnmE from Anaplasma phagocytophilum (strain HZ).